Reading from the N-terminus, the 257-residue chain is Phosphonates import ATP-binding protein PhnC (257 aa).

The 245-residue stretch at 4-248 (IEFKDVSKVY…VFNHIYGRSI (245 aa)) folds into the ABC transporter domain.

This sequence belongs to the ABC transporter superfamily. Phosphonates importer (TC 3.A.1.9.1) family. As to quaternary structure, the complex is composed of two ATP-binding proteins (PhnC), two transmembrane proteins (PhnE) and a solute-binding protein (PhnD).

The protein resides in the cell membrane. It catalyses the reaction phosphonate(out) + ATP + H2O = phosphonate(in) + ADP + phosphate + H(+). Functionally, part of the ABC transporter complex PhnCDE involved in phosphonates import. Responsible for energy coupling to the transport system. The protein is Phosphonates import ATP-binding protein PhnC of Staphylococcus epidermidis (strain ATCC 35984 / DSM 28319 / BCRC 17069 / CCUG 31568 / BM 3577 / RP62A).